The sequence spans 205 residues: Large ribosomal subunit protein uL3 (205 aa).

This sequence belongs to the universal ribosomal protein uL3 family. Part of the 50S ribosomal subunit. Forms a cluster with proteins L14 and L19.

Functionally, one of the primary rRNA binding proteins, it binds directly near the 3'-end of the 23S rRNA, where it nucleates assembly of the 50S subunit. The protein is Large ribosomal subunit protein uL3 of Bacteroides fragilis (strain ATCC 25285 / DSM 2151 / CCUG 4856 / JCM 11019 / LMG 10263 / NCTC 9343 / Onslow / VPI 2553 / EN-2).